The primary structure comprises 531 residues: Developmental and secondary metabolism regulator VE1 (531 aa).

The 195-residue stretch at 26 to 220 (NRSLWYQMTV…ADQGCPVRIR (195 aa)) folds into the Velvet domain. Positions 40–45 (ERARAC) match the Nuclear localization signal motif. 2 disordered regions span residues 206–435 (LSKT…SQTS) and 447–517 (PVSP…SRAD). A compositionally biased stretch (basic and acidic residues) spans 244–253 (FERREEDFGR). Positions 295–306 (YPPPPPPPPSYE) are enriched in pro residues. Polar residues predominate over residues 348 to 357 (YAPTSQSPYS). Over residues 381–390 (LKHELYDRRQ) the composition is skewed to basic and acidic residues. The segment covering 391–405 (STSTYVPPSPSVYST) has biased composition (low complexity). A compositionally biased stretch (pro residues) spans 416–427 (SYPPTPVAAPRP). A PEST region spans residues 430 to 461 (MHSQTSLPALKIDQLVSPVSPLPPIEPQTGPA). Residues 479 to 491 (FAQSTRPLHNGQR) show a composition bias toward polar residues.

This sequence belongs to the velvet family. VeA subfamily. As to quaternary structure, component of the heterotrimeric velvet complex composed of LAE1, VE1 and VELB; VE1 acting as a bridging protein between LAE1 and VELB. Interacts with VELB and VELC.

The protein localises to the nucleus. It is found in the cytoplasm. Functionally, component of the velvet transcription factor complex that controls sexual/asexual developmental ratio in response to light, promoting sexual development in the darkness while stimulating asexual sporulation under illumination. The velvet complex hat acts as a global regulator for secondary metabolite gene expression. Controls the expression of the cycotoxins fumonisins and fusarins gene cluster. Involved in cell wall integrity, cell surface hydrophobicity, hyphal polarity and conidiation pattern. Required for pathogenicity against maize seedlings. Involved in oxidative stress resistance by positively regulating the transcription of the catalase-encoding gene CAT2. The chain is Developmental and secondary metabolism regulator VE1 from Gibberella moniliformis (strain M3125 / FGSC 7600) (Maize ear and stalk rot fungus).